The primary structure comprises 412 residues: Histidinol dehydrogenase (412 aa).

NAD(+) is bound by residues Tyr-118, Gln-176, and Asn-199. Substrate-binding residues include Thr-222, Gln-244, and His-247. Positions 244 and 247 each coordinate Zn(2+). Residues Glu-311 and His-312 each act as proton acceptor in the active site. His-312, Asp-345, Glu-399, and His-404 together coordinate substrate. Asp-345 provides a ligand contact to Zn(2+). His-404 serves as a coordination point for Zn(2+).

This sequence belongs to the histidinol dehydrogenase family. Zn(2+) serves as cofactor.

It catalyses the reaction L-histidinol + 2 NAD(+) + H2O = L-histidine + 2 NADH + 3 H(+). It functions in the pathway amino-acid biosynthesis; L-histidine biosynthesis; L-histidine from 5-phospho-alpha-D-ribose 1-diphosphate: step 9/9. In terms of biological role, catalyzes the sequential NAD-dependent oxidations of L-histidinol to L-histidinaldehyde and then to L-histidine. This Thermus thermophilus (strain ATCC BAA-163 / DSM 7039 / HB27) protein is Histidinol dehydrogenase.